Reading from the N-terminus, the 36-residue chain is Pancreatic polypeptide (36 aa).

Tyr36 carries the tyrosine amide modification.

It belongs to the NPY family.

Its subcellular location is the secreted. In terms of biological role, hormone secreted by pancreatic cells that acts as a regulator of pancreatic and gastrointestinal functions probably by signaling through the G protein-coupled receptor NPY4R2. The sequence is that of Pancreatic polypeptide (PPY) from Macaca mulatta (Rhesus macaque).